A 355-amino-acid chain; its full sequence is Peptide chain release factor 1 (355 aa).

N5-methylglutamine is present on glutamine 233.

Belongs to the prokaryotic/mitochondrial release factor family. Methylated by PrmC. Methylation increases the termination efficiency of RF1.

It is found in the cytoplasm. Peptide chain release factor 1 directs the termination of translation in response to the peptide chain termination codons UAG and UAA. The polypeptide is Peptide chain release factor 1 (Dehalococcoides mccartyi (strain ATCC BAA-2100 / JCM 16839 / KCTC 5957 / BAV1)).